A 465-amino-acid chain; its full sequence is FAD-dependent oxidoreductase pigF (465 aa).

An N-terminal signal peptide occupies residues 1–17; sequence MMLLTLLILSSVGLAAA. 4 N-linked (GlcNAc...) asparagine glycosylation sites follow: asparagine 95, asparagine 138, asparagine 260, and asparagine 327. Aspartate 444 carries the GPI-anchor amidated aspartate lipid modification. Positions 445–465 are cleaved as a propeptide — removed in mature form; it reads SASGIWNLTNAVVLPGLLTGL. Asparagine 451 carries an N-linked (GlcNAc...) asparagine glycan.

The protein belongs to the beta-cyclopiazonate dehydrogenase family. FAD serves as cofactor.

Its subcellular location is the cell membrane. It functions in the pathway secondary metabolite biosynthesis. Functionally, FAD-dependent oxidoreductase; part of the gene cluster that mediates the biosynthesis of azaphilone pigments (MonAzPs), a complex mixture of compounds with a common azaphilone skeleton very widely used as food colorants. Within the pathway, pigF desaturates C6(7) to afford the orange and red pigments from yellow pigments. The first step of the pathway is performed by the nrPKS pigA that forms the hexaketide precursor from successive condensations of five malonyl-CoA units, with a simple acetyl-CoA starter unit. The role of esterase pigG is not clear, but it may play at most a supplementary role in the formation of the benzaldehyde produced by the pigA nrPKS. This very reactive benzaldehyde is intercepted by the pigC ketoreductase that to provide the first stable enzyme-free MonAzPs intermediate, 6-(4-hydroxy-2-oxopentyl)-3-methyl-2,4-dioxocyclohexane carbaldehyde, also known as M7PKS-1. The FAD-dependent monooxygenase pigN hydroxylates M7PKS-1 at C-4, which triggers the formation of the pyran ring. PigJ, pigK and pigD are involved in the acetylation of the pyran ring. PigJ and pigK form the two subunits of a dedicated fungal FAS that produces the side chain fatty acyl moiety of MonAzPs and pigD transfers the fatty acyl chain to the C-4 alcohol. PigM and pigO are involved in the elimination of the omega-1 alcohol. PigM acts as an O-acetyltransferase that synthesizes the putative O-11 acetyl intermediate whereas pigO eliminates acetic acid to yield an intermediate with a C10(11) double bond. The dehydration of the C-11 alcohol followed by the reduction of the C6(7) double bond by the NAD(P)H-dependent oxidoreductase pigE increases the electrophilicity of the C-5 ketone of the resulting acyl benzopyran. This in turn sets up the C-5 ketone for an intramolecular Knoevenagel aldol condensation with the C-20 enol of the side chain. This condensation affords the characteristic linear tricyclic carbon skeletons of the yellow pigments that serve as the common precursors for the classical yellow pigments monascin and ankaflavin, orange pigments rubopunctatin and monascorubrin, and red pigments ribropunctamine and monascorubramine. The FAD-dependent oxidoreductase pigF is especially invoved in the biosynthesis of orange and red pigments via desaturation of C6(7). The polypeptide is FAD-dependent oxidoreductase pigF (Monascus ruber (Mold)).